Reading from the N-terminus, the 55-residue chain is Large ribosomal subunit protein bL33A (55 aa).

This sequence belongs to the bacterial ribosomal protein bL33 family.

This Mycolicibacterium vanbaalenii (strain DSM 7251 / JCM 13017 / BCRC 16820 / KCTC 9966 / NRRL B-24157 / PYR-1) (Mycobacterium vanbaalenii) protein is Large ribosomal subunit protein bL33A.